We begin with the raw amino-acid sequence, 424 residues long: Serine--tRNA ligase (424 aa).

Position 230–232 (230–232 (TAE)) interacts with L-serine. An ATP-binding site is contributed by 261–263 (RSE). Residue Glu284 participates in L-serine binding. 348 to 351 (EISS) serves as a coordination point for ATP. Ser384 is an L-serine binding site.

It belongs to the class-II aminoacyl-tRNA synthetase family. Type-1 seryl-tRNA synthetase subfamily. As to quaternary structure, homodimer. The tRNA molecule binds across the dimer.

Its subcellular location is the cytoplasm. The enzyme catalyses tRNA(Ser) + L-serine + ATP = L-seryl-tRNA(Ser) + AMP + diphosphate + H(+). It catalyses the reaction tRNA(Sec) + L-serine + ATP = L-seryl-tRNA(Sec) + AMP + diphosphate + H(+). It functions in the pathway aminoacyl-tRNA biosynthesis; selenocysteinyl-tRNA(Sec) biosynthesis; L-seryl-tRNA(Sec) from L-serine and tRNA(Sec): step 1/1. Catalyzes the attachment of serine to tRNA(Ser). Is also able to aminoacylate tRNA(Sec) with serine, to form the misacylated tRNA L-seryl-tRNA(Sec), which will be further converted into selenocysteinyl-tRNA(Sec). The chain is Serine--tRNA ligase from Streptococcus pneumoniae (strain 70585).